The sequence spans 164 residues: MDNHTKQTVQQIPLLTVKAGPRDGDKWIDRLKEEYQALIKYVEINKKADNDWFNIESNPLGTRWQGKCWYIYNFKKYEFDLEFDMPVTYPETAPEIAIPELDGKTEKMYRGGKICLTIHFKPLWSRNVPHFGIAHALALGLAPWLAAEVPHLVDNGIIKHKEDK.

The active-site Glycyl thioester intermediate is Cys115.

The protein belongs to the ubiquitin-conjugating enzyme family. UFC1 subfamily.

Its function is as follows. E2-like enzyme which forms an intermediate with ufm1 via a thioester linkage. The polypeptide is Ubiquitin-fold modifier-conjugating enzyme 1 (ufc1) (Dictyostelium discoideum (Social amoeba)).